A 61-amino-acid chain; its full sequence is Putative MSV199 domain-containing protein 200R (61 aa).

The sequence is that of Putative MSV199 domain-containing protein 200R from Invertebrate iridescent virus 6 (IIV-6).